An 857-amino-acid chain; its full sequence is DNA mismatch repair protein MutS (857 aa).

ATP is bound at residue 613–620; the sequence is GPNMGGKS. The tract at residues 797–820 is disordered; the sequence is TSLPHEQPAAHKAKDAPQVPHQSD.

It belongs to the DNA mismatch repair MutS family.

In terms of biological role, this protein is involved in the repair of mismatches in DNA. It is possible that it carries out the mismatch recognition step. This protein has a weak ATPase activity. The protein is DNA mismatch repair protein MutS of Pseudomonas putida (strain ATCC 47054 / DSM 6125 / CFBP 8728 / NCIMB 11950 / KT2440).